The following is a 265-amino-acid chain: Hemin import ATP-binding protein HmuV (265 aa).

The ABC transporter domain occupies 13–249 (LKASNLHLQL…TAVENVYGWP (237 aa)). 45 to 52 (GPNGAGKS) serves as a coordination point for ATP.

This sequence belongs to the ABC transporter superfamily. Heme (hemin) importer (TC 3.A.1.14.5) family. In terms of assembly, the complex is composed of two ATP-binding proteins (HmuV), two transmembrane proteins (HmuU) and a solute-binding protein (HmuT).

The protein localises to the cell inner membrane. In terms of biological role, part of the ABC transporter complex HmuTUV involved in hemin import. Responsible for energy coupling to the transport system. This Photobacterium damsela subsp. piscicida (Pasteurella piscicida) protein is Hemin import ATP-binding protein HmuV.